We begin with the raw amino-acid sequence, 320 residues long: Methionine import ATP-binding protein MetN (320 aa).

The 236-residue stretch at 2–237 folds into the ABC transporter domain; it reads IEIKNVSKYF…PSSEMKKLIG (236 aa). 34–41 is a binding site for ATP; the sequence is GHSGAGKS.

The protein belongs to the ABC transporter superfamily. Methionine importer (TC 3.A.1.24) family. The complex is composed of two ATP-binding proteins (MetN), two transmembrane proteins (MetI) and a solute-binding protein (MetQ).

The protein resides in the cell membrane. It carries out the reaction L-methionine(out) + ATP + H2O = L-methionine(in) + ADP + phosphate + H(+). The catalysed reaction is D-methionine(out) + ATP + H2O = D-methionine(in) + ADP + phosphate + H(+). Functionally, part of the ABC transporter complex MetNIQ involved in methionine import. Responsible for energy coupling to the transport system. The chain is Methionine import ATP-binding protein MetN from Clostridium acetobutylicum (strain ATCC 824 / DSM 792 / JCM 1419 / IAM 19013 / LMG 5710 / NBRC 13948 / NRRL B-527 / VKM B-1787 / 2291 / W).